Consider the following 180-residue polypeptide: GTP cyclohydrolase 1 (180 aa).

Cys-71, His-74, and Cys-142 together coordinate Zn(2+).

The protein belongs to the GTP cyclohydrolase I family. As to quaternary structure, toroid-shaped homodecamer, composed of two pentamers of five dimers.

It carries out the reaction GTP + H2O = 7,8-dihydroneopterin 3'-triphosphate + formate + H(+). The protein operates within cofactor biosynthesis; 7,8-dihydroneopterin triphosphate biosynthesis; 7,8-dihydroneopterin triphosphate from GTP: step 1/1. This chain is GTP cyclohydrolase 1, found in Helicobacter acinonychis (strain Sheeba).